The chain runs to 196 residues: uncharacterized protein (196 aa).

This is an uncharacterized protein from Saccharolobus islandicus (Sulfolobus islandicus).